A 276-amino-acid polypeptide reads, in one-letter code: NADPH-dependent 7-cyano-7-deazaguanine reductase (276 aa).

80–82 contacts substrate; sequence VES. Position 82–83 (82–83) interacts with NADPH; it reads SK. Cys183 acts as the Thioimide intermediate in catalysis. The Proton donor role is filled by Asp190. 222–223 lines the substrate pocket; that stretch reads HE. 251-252 serves as a coordination point for NADPH; sequence RG.

This sequence belongs to the GTP cyclohydrolase I family. QueF type 2 subfamily. Homodimer.

It is found in the cytoplasm. It carries out the reaction 7-aminomethyl-7-carbaguanine + 2 NADP(+) = 7-cyano-7-deazaguanine + 2 NADPH + 3 H(+). It functions in the pathway tRNA modification; tRNA-queuosine biosynthesis. Catalyzes the NADPH-dependent reduction of 7-cyano-7-deazaguanine (preQ0) to 7-aminomethyl-7-deazaguanine (preQ1). In Burkholderia cenocepacia (strain HI2424), this protein is NADPH-dependent 7-cyano-7-deazaguanine reductase.